The primary structure comprises 812 residues: Phospholipase D alpha 1 (812 aa).

Residues 1–46 (MAQMLLHGTLHATIFEAASLSNPHRASGSAPKFIRKFVEGIEDTVG) constitute a propeptide that is removed on maturation. Positions 1–130 (MAQMLLHGTL…LNGEEIDRWL (130 aa)) constitute a C2 domain. A Ca(2+)-binding site is contributed by Asp190. The 39-residue stretch at 330 to 368 (TMFTHHQKIVVVDHELPNQGSQQRRIVSFVGGLDLCDGR) folds into the PLD phosphodiesterase 1 domain. Catalysis depends on residues His335, Lys337, and Asp342. His335 lines the a 1,2-diacyl-sn-glycero-3-phosphate pocket. Residues His374 and His408 each contribute to the Ca(2+) site. A 1,2-diacyl-sn-glycero-3-phosphate contacts are provided by Gln524 and His663. A PLD phosphodiesterase 2 domain is found at 658-685 (FMIYVHTKMMIVDDEYIIIGSANINQRS). Active-site residues include His663, Lys665, and Asp670. Glu724 is a Ca(2+) binding site.

This sequence belongs to the phospholipase D family. C2-PLD subfamily. As to quaternary structure, monomer. The cofactor is Ca(2+). In terms of tissue distribution, expressed in leaves, roots, developing seeds and cultured cells.

It carries out the reaction a 1,2-diacyl-sn-glycero-3-phosphocholine + H2O = a 1,2-diacyl-sn-glycero-3-phosphate + choline + H(+). Its function is as follows. Hydrolyzes glycerol-phospholipids at the terminal phosphodiesteric bond. Plays an important role in various cellular processes. This is Phospholipase D alpha 1 (PLD1) from Oryza sativa subsp. japonica (Rice).